Here is a 357-residue protein sequence, read N- to C-terminus: Alanine racemase (357 aa).

Lys35 serves as the catalytic Proton acceptor; specific for D-alanine. Lys35 is modified (N6-(pyridoxal phosphate)lysine). Position 131 (Arg131) interacts with substrate. Tyr256 serves as the catalytic Proton acceptor; specific for L-alanine. Met304 is a binding site for substrate.

It belongs to the alanine racemase family. The cofactor is pyridoxal 5'-phosphate.

It catalyses the reaction L-alanine = D-alanine. Its pathway is amino-acid biosynthesis; D-alanine biosynthesis; D-alanine from L-alanine: step 1/1. Functionally, catalyzes the interconversion of L-alanine and D-alanine. May also act on other amino acids. This is Alanine racemase (alr) from Legionella pneumophila (strain Corby).